A 212-amino-acid chain; its full sequence is Adenylate kinase (212 aa).

10-15 (GAGKGT) contacts ATP. Positions 30-59 (AIGDIFRAIIKTSSKDAEVINSYVEQGKLI) are NMP. AMP contacts are provided by residues Arg36, 57 to 59 (KLI), 85 to 88 (GYPR), and Gln92. The segment at 122–160 (GRYSCKSCGKIYNDYFLKPRIDKICDVCKSSVFEYRKDD) is LID. Arg123 is an ATP binding site. Positions 126 and 129 each coordinate Zn(2+). 132 to 133 (IY) is an ATP binding site. Zn(2+)-binding residues include Cys146 and Cys149. Positions 157 and 168 each coordinate AMP. Lys196 provides a ligand contact to ATP.

Belongs to the adenylate kinase family. As to quaternary structure, monomer.

The protein localises to the cytoplasm. It catalyses the reaction AMP + ATP = 2 ADP. It participates in purine metabolism; AMP biosynthesis via salvage pathway; AMP from ADP: step 1/1. In terms of biological role, catalyzes the reversible transfer of the terminal phosphate group between ATP and AMP. Plays an important role in cellular energy homeostasis and in adenine nucleotide metabolism. This is Adenylate kinase from Rickettsia bellii (strain RML369-C).